The primary structure comprises 363 residues: Ankyrin repeat domain-containing protein 40 (363 aa).

Met1 is modified (N-acetylmethionine). ANK repeat units lie at residues 9–38 (EQQE…DVNS) and 43–72 (NGWT…DREI). Residues 135–167 (DSTQLQNGGPSPPPVSPPADSSPPLLPPTETPL) are disordered. The segment covering 144–164 (PSPPPVSPPADSSPPLLPPTE) has biased composition (pro residues). A Phosphoserine modification is found at Ser176.

The protein is Ankyrin repeat domain-containing protein 40 (Ankrd40) of Mus musculus (Mouse).